The following is a 262-amino-acid chain: tRNA pseudouridine synthase A (262 aa).

Catalysis depends on aspartate 51, which acts as the Nucleophile. Residue tyrosine 109 coordinates substrate.

The protein belongs to the tRNA pseudouridine synthase TruA family. Homodimer.

The catalysed reaction is uridine(38/39/40) in tRNA = pseudouridine(38/39/40) in tRNA. Formation of pseudouridine at positions 38, 39 and 40 in the anticodon stem and loop of transfer RNAs. This Glaesserella parasuis serovar 5 (strain SH0165) (Haemophilus parasuis) protein is tRNA pseudouridine synthase A.